Consider the following 337-residue polypeptide: Phosphate acyltransferase (337 aa).

The protein belongs to the PlsX family. In terms of assembly, homodimer. Probably interacts with PlsY.

It is found in the cytoplasm. The catalysed reaction is a fatty acyl-[ACP] + phosphate = an acyl phosphate + holo-[ACP]. It functions in the pathway lipid metabolism; phospholipid metabolism. Functionally, catalyzes the reversible formation of acyl-phosphate (acyl-PO(4)) from acyl-[acyl-carrier-protein] (acyl-ACP). This enzyme utilizes acyl-ACP as fatty acyl donor, but not acyl-CoA. This is Phosphate acyltransferase from Listeria welshimeri serovar 6b (strain ATCC 35897 / DSM 20650 / CCUG 15529 / CIP 8149 / NCTC 11857 / SLCC 5334 / V8).